The chain runs to 286 residues: 4-hydroxy-3-methylbut-2-enyl diphosphate reductase (286 aa).

A [4Fe-4S] cluster-binding site is contributed by cysteine 12. Histidine 46 and histidine 79 together coordinate (2E)-4-hydroxy-3-methylbut-2-enyl diphosphate. Dimethylallyl diphosphate-binding residues include histidine 46 and histidine 79. Isopentenyl diphosphate is bound by residues histidine 46 and histidine 79. [4Fe-4S] cluster is bound at residue cysteine 101. Histidine 129 serves as a coordination point for (2E)-4-hydroxy-3-methylbut-2-enyl diphosphate. Histidine 129 contributes to the dimethylallyl diphosphate binding site. Histidine 129 provides a ligand contact to isopentenyl diphosphate. Glutamate 131 (proton donor) is an active-site residue. (2E)-4-hydroxy-3-methylbut-2-enyl diphosphate is bound at residue threonine 169. Position 198 (cysteine 198) interacts with [4Fe-4S] cluster. Residues serine 226, asparagine 228, and serine 270 each contribute to the (2E)-4-hydroxy-3-methylbut-2-enyl diphosphate site. Serine 226, asparagine 228, and serine 270 together coordinate dimethylallyl diphosphate. Isopentenyl diphosphate contacts are provided by serine 226, asparagine 228, and serine 270.

Belongs to the IspH family. [4Fe-4S] cluster is required as a cofactor.

The catalysed reaction is isopentenyl diphosphate + 2 oxidized [2Fe-2S]-[ferredoxin] + H2O = (2E)-4-hydroxy-3-methylbut-2-enyl diphosphate + 2 reduced [2Fe-2S]-[ferredoxin] + 2 H(+). The enzyme catalyses dimethylallyl diphosphate + 2 oxidized [2Fe-2S]-[ferredoxin] + H2O = (2E)-4-hydroxy-3-methylbut-2-enyl diphosphate + 2 reduced [2Fe-2S]-[ferredoxin] + 2 H(+). Its pathway is isoprenoid biosynthesis; dimethylallyl diphosphate biosynthesis; dimethylallyl diphosphate from (2E)-4-hydroxy-3-methylbutenyl diphosphate: step 1/1. The protein operates within isoprenoid biosynthesis; isopentenyl diphosphate biosynthesis via DXP pathway; isopentenyl diphosphate from 1-deoxy-D-xylulose 5-phosphate: step 6/6. In terms of biological role, catalyzes the conversion of 1-hydroxy-2-methyl-2-(E)-butenyl 4-diphosphate (HMBPP) into a mixture of isopentenyl diphosphate (IPP) and dimethylallyl diphosphate (DMAPP). Acts in the terminal step of the DOXP/MEP pathway for isoprenoid precursor biosynthesis. The protein is 4-hydroxy-3-methylbut-2-enyl diphosphate reductase of Solidesulfovibrio magneticus (strain ATCC 700980 / DSM 13731 / RS-1) (Desulfovibrio magneticus).